The chain runs to 108 residues: Ig kappa chain V region K-25 (108 aa).

A framework-1 region spans residues 1-23 (AVELTQTPASVEAAVGGTVTIKC). Residues 24–34 (QASQBIYSYLS) are complementarity-determining-1. The segment at 35-49 (WYQQKPGQPPKLLIY) is framework-2. The interval 50-56 (KASTLAS) is complementarity-determining-2. Positions 57–88 (GVSSRFKGSGSGTEFTLTISDLZCADAATYYC) are framework-3. The complementarity-determining-3 stretch occupies residues 89 to 97 (QTYSYSSTY). Residues 98–107 (FGGGTEVVVK) form a framework-4 region.

In Oryctolagus cuniculus (Rabbit), this protein is Ig kappa chain V region K-25.